We begin with the raw amino-acid sequence, 166 residues long: Large ribosomal subunit protein uL10 (166 aa).

It belongs to the universal ribosomal protein uL10 family. As to quaternary structure, part of the ribosomal stalk of the 50S ribosomal subunit. The N-terminus interacts with L11 and the large rRNA to form the base of the stalk. The C-terminus forms an elongated spine to which L12 dimers bind in a sequential fashion forming a multimeric L10(L12)X complex.

Forms part of the ribosomal stalk, playing a central role in the interaction of the ribosome with GTP-bound translation factors. The polypeptide is Large ribosomal subunit protein uL10 (Pseudomonas fluorescens (strain Pf0-1)).